An 83-amino-acid chain; its full sequence is Large ribosomal subunit protein eL43 (83 aa).

Zn(2+) contacts are provided by cysteine 38, cysteine 41, cysteine 56, and cysteine 59. The C4-type zinc finger occupies cysteine 38 to cysteine 59.

Belongs to the eukaryotic ribosomal protein eL43 family. Putative zinc-binding subfamily. In terms of assembly, part of the 50S ribosomal subunit. Requires Zn(2+) as cofactor.

Functionally, binds to the 23S rRNA. This Pyrococcus horikoshii (strain ATCC 700860 / DSM 12428 / JCM 9974 / NBRC 100139 / OT-3) protein is Large ribosomal subunit protein eL43.